The following is a 290-amino-acid chain: Transcription factor HES-1 (290 aa).

The tract at residues 1–47 (MPADTGMEKPTASPIAGAPASASHTPDKPRSASEHRKSSKPIMEKRR) is disordered. A compositionally biased stretch (low complexity) spans 10 to 23 (PTASPIAGAPASAS). Basic and acidic residues predominate over residues 25 to 36 (TPDKPRSASEHR). A bHLH domain is found at 35–92 (HRKSSKPIMEKRRRARINESLGQLKMLILDALKKDSSRHSKLEKADILEMTVKHLRNL). The region spanning 111 to 144 (YRAGFNECMNEVTRFLSTCEGVNADVRARLLGHL) is the Orange domain. A WRPW motif motif is present at residues 287-290 (WRPW).

In terms of assembly, transcription repression requires formation of a complex with a corepressor protein of the Groucho/TLE family.

It localises to the nucleus. Functionally, transcriptional repressor of genes that require a bHLH protein for their transcription. May act as a negative regulator of myogenesis by inhibiting the functions of MYOD1 and ASH1. This is Transcription factor HES-1 (HES1) from Gallus gallus (Chicken).